A 404-amino-acid chain; its full sequence is RNA exonuclease 3 (404 aa).

The Exonuclease domain maps to 243-389 (VLSLDCEMAF…QDAIATMDVV (147 aa)).

It belongs to the REXO1/REXO3 family.

It is found in the cytoplasm. Its subcellular location is the nucleus. Its function is as follows. 3' to 5' exoribonuclease required for proper 3' end maturation of MRP RNA and of the U5L snRNA. This is RNA exonuclease 3 (REX3) from Saccharomyces cerevisiae (strain ATCC 204508 / S288c) (Baker's yeast).